Consider the following 342-residue polypeptide: MTNLTLALDAMGGDHGPQVTVPAALQALRLHPKLSLLLVGDETQISPYLSSAEIDVRSRITLVHTTEVVRMDDKPATALRHAKNSSMRLAIEQVRDGMADGCVSAGNTGALMAMAKVLLKMLPGVDRPALVSCLPAINGKPVYLLDLGANIQCDYDTLFQFAVMGSVLSEAVDKIARPKVALLNVGIEECKGNGDVQQAAQLLLHTPQLNYAGFIEGDEIYSGKVDVIVCDGFVGNITLKTSEGIARLLVHQLKQGLAKGFVVRILARLLAPRIQKVLNQMNPDHYNGASLLGLRAVVVKSHGNADEHAYIQAISLAYTEAKRRLPEMIKDRLESILLDINS.

The protein belongs to the PlsX family. Homodimer. Probably interacts with PlsY.

Its subcellular location is the cytoplasm. The catalysed reaction is a fatty acyl-[ACP] + phosphate = an acyl phosphate + holo-[ACP]. It functions in the pathway lipid metabolism; phospholipid metabolism. In terms of biological role, catalyzes the reversible formation of acyl-phosphate (acyl-PO(4)) from acyl-[acyl-carrier-protein] (acyl-ACP). This enzyme utilizes acyl-ACP as fatty acyl donor, but not acyl-CoA. The polypeptide is Phosphate acyltransferase (Shewanella amazonensis (strain ATCC BAA-1098 / SB2B)).